The primary structure comprises 339 residues: AB hydrolase superfamily protein B1A11.02 (339 aa).

This sequence belongs to the AB hydrolase superfamily.

This chain is AB hydrolase superfamily protein B1A11.02, found in Schizosaccharomyces pombe (strain 972 / ATCC 24843) (Fission yeast).